Reading from the N-terminus, the 894-residue chain is Phosphoenolpyruvate carboxylase (894 aa).

Active-site residues include His143 and Lys556.

It belongs to the PEPCase type 1 family. Mg(2+) is required as a cofactor.

The enzyme catalyses oxaloacetate + phosphate = phosphoenolpyruvate + hydrogencarbonate. Functionally, forms oxaloacetate, a four-carbon dicarboxylic acid source for the tricarboxylic acid cycle. This is Phosphoenolpyruvate carboxylase from Acinetobacter baumannii (strain ATCC 17978 / DSM 105126 / CIP 53.77 / LMG 1025 / NCDC KC755 / 5377).